An 86-amino-acid chain; its full sequence is UPF0297 protein STH1998 (86 aa).

This sequence belongs to the UPF0297 family.

The polypeptide is UPF0297 protein STH1998 (Symbiobacterium thermophilum (strain DSM 24528 / JCM 14929 / IAM 14863 / T)).